We begin with the raw amino-acid sequence, 135 residues long: PTS system sorbose-specific EIIA component (135 aa).

A PTS EIIA type-4 domain is found at 1 to 131; that stretch reads MVHAIFCAHG…CVVWQQPETV (131 aa). The active-site Tele-phosphohistidine intermediate is His9. The residue at position 9 (His9) is a Phosphohistidine; by HPr.

Its subcellular location is the cytoplasm. Its function is as follows. The phosphoenolpyruvate-dependent sugar phosphotransferase system (PTS), a major carbohydrate active transport system, catalyzes the phosphorylation of incoming sugar substrates concomitant with their translocation across the cell membrane. The enzyme II SorABFM PTS system is involved in L-sorbose transport. The chain is PTS system sorbose-specific EIIA component from Klebsiella pneumoniae.